The following is a 5112-amino-acid chain: Malformin synthetase mlfA (5112 aa).

The interval 225–616 (ERHAANRPHS…CGRADTQVKL (392 aa)) is adenylation 1. Residues 757-830 (SRLEQEIQLA…EAASLAEVQE (74 aa)) enclose the Carrier 1 domain. Serine 791 is modified (O-(pantetheine 4'-phosphoryl)serine). Residues 868–1299 (EDVFPCTTMQ…ALDSLTLLQA (432 aa)) are condensation 1. The segment at 1327–1716 (DRRVTRQPDT…GRKDTQVKLR (390 aa)) is adenylation 2. The 78-residue stretch at 1854 to 1931 (TAASELERTL…QLAAELGESP (78 aa)) folds into the Carrier 2 domain. Position 1891 is an O-(pantetheine 4'-phosphoryl)serine (serine 1891). 2 disordered regions span residues 1926-1961 (ELGESPRSSTSSASSSTEDEFTISTPDDSSTNDGVD) and 1994-2034 (GGSS…VPEP). Composition is skewed to low complexity over residues 1930–1941 (SPRSSTSSASSS) and 1994–2012 (GGSSSSKTPSVSSSSSSSS). The condensation 2 stretch occupies residues 2064 to 2479 (EDIYPATALQ…AVSYSDKQTL (416 aa)). The segment at 2502–2894 (IRTPHAPAVC…IGRRDGQVKL (393 aa)) is adenylation 3. In terms of domain architecture, Carrier 3 spans 3030 to 3106 (RPTTAKECEM…QLLFHLRNAK (77 aa)). Serine 3067 bears the O-(pantetheine 4'-phosphoryl)serine mark. 2 condensation regions span residues 3122–3586 (WVDL…TYEQ) and 3607–4044 (NIYP…EQLV). Positions 4069–4459 (HSSRQAVCAW…VGRKDNQIKF (391 aa)) are adenylation 4. Positions 4593–4669 (MPSTEAECIM…DLARHNSLVQ (77 aa)) constitute a Carrier 4 domain. O-(pantetheine 4'-phosphoryl)serine is present on serine 4630. The condensation 5 stretch occupies residues 4724 to 5106 (IVVDIPGRIS…VEKVVALLRD (383 aa)).

Belongs to the NRP synthetase family.

It participates in secondary metabolite biosynthesis. In terms of biological role, nonribosomal peptide synthetase; part of the gene cluster that mediates the biosynthesis of malformins, cyclic pentapeptides with a disulfide bond between 2 consecutive cysteins, that show potential anti-tumor as well as antimalarial and antitrypanosomal properties. The nonribosomal peptide synthetase mlfA is responsible of the formation of the cyclic pentapeptide. MlfA probably acts iteratively on one amino acid and possesses multiple amino acid specificities since it is involved in the biosynthesis of multiple malformins, including malformin C and malformin A2. Malformin C corresponds to a cyclo[D-Cys-D-Cys-Val-D-Leu-Val] pentapeptide whereas malformin A2 corresponds to a cyclo[D-Cys-D-Cys-Val-D-Leu-Ile] pentapeptide. The malformin biosynthesis clusters in malformin-producing fungi also contain enzymes involved in the formation of the disulfide bond between the two consecutive cysteins within malformins, in addition to additional tailoring enzymes such as methyltransferases or oxidoreductases. They are also composed of up to 4 major facilitator superfamily transporters, and transcription factors probably involved in the regulation of the expression of those clusters. The sequence is that of Malformin synthetase mlfA from Aspergillus brasiliensis (strain CBS 101740 / IMI 381727 / IBT 21946).